The sequence spans 668 residues: Kelch repeat-containing protein ARB_01230 (668 aa).

An N-terminal signal peptide occupies residues 1 to 32 (MEVGRFASKSASMTYLLLVLLVGFILPQQGQH). Residues 33-522 (AHARTLARRD…GSGSDGPNIA (490 aa)) lie on the Extracellular side of the membrane. N-linked (GlcNAc...) asparagine glycosylation is present at N60. Kelch repeat units follow at residues 62-108 (TLYI…PRGD) and 125-176 (SLFL…ANIP). N-linked (GlcNAc...) asparagine glycans are attached at residues N251 and N291. Kelch repeat units lie at residues 283-331 (ILGL…AVAA), 340-395 (QVYL…IWNS), 396-445 (QIVV…ASQT), and 463-509 (VQSV…GPHA). Residues 523–543 (AIVAGVIAGCLGVLAIYLGFV) traverse the membrane as a helical segment. The Cytoplasmic segment spans residues 544 to 668 (TWLYRRRLAI…PRQTLRVINQ (125 aa)). A disordered region spans residues 611–642 (DNQRHNHTRSSSGGNFDHLAQPERPSTSSSVE).

It is found in the membrane. Its subcellular location is the secreted. In Arthroderma benhamiae (strain ATCC MYA-4681 / CBS 112371) (Trichophyton mentagrophytes), this protein is Kelch repeat-containing protein ARB_01230.